The following is a 77-amino-acid chain: Large ribosomal subunit protein uL24 (77 aa).

Residues 42–61 (KKHQKPSQTNANGGVVESEG) form a disordered region.

Belongs to the universal ribosomal protein uL24 family. As to quaternary structure, part of the 50S ribosomal subunit.

Its function is as follows. One of two assembly initiator proteins, it binds directly to the 5'-end of the 23S rRNA, where it nucleates assembly of the 50S subunit. In terms of biological role, one of the proteins that surrounds the polypeptide exit tunnel on the outside of the subunit. This Lactobacillus helveticus (strain DPC 4571) protein is Large ribosomal subunit protein uL24.